Here is a 162-residue protein sequence, read N- to C-terminus: MKVRGKAIVYGDKIDTDVIIPAKYLVYTDPAVLGQHAMEPLDPEFPKKAKGAVLVAGRAFGMGSSREQAAIALKGAGVLAVVAESFARIFFRNAINVGLPVLQVPDVTKRVREGDELEVDIEGGYLLNLTTGERLEGKPLRGLPLAILKAGGLVNFLKTAGR.

This sequence belongs to the LeuD family. LeuD type 2 subfamily. In terms of assembly, heterodimer of LeuC and LeuD.

It catalyses the reaction (2R,3S)-3-isopropylmalate = (2S)-2-isopropylmalate. It functions in the pathway amino-acid biosynthesis; L-leucine biosynthesis; L-leucine from 3-methyl-2-oxobutanoate: step 2/4. Its function is as follows. Catalyzes the isomerization between 2-isopropylmalate and 3-isopropylmalate, via the formation of 2-isopropylmaleate. In Pyrobaculum neutrophilum (strain DSM 2338 / JCM 9278 / NBRC 100436 / V24Sta) (Thermoproteus neutrophilus), this protein is 3-isopropylmalate dehydratase small subunit.